A 148-amino-acid chain; its full sequence is D-aminoacyl-tRNA deacylase (148 aa).

The short motif at 137-138 (GP) is the Gly-cisPro motif, important for rejection of L-amino acids element.

This sequence belongs to the DTD family. In terms of assembly, homodimer.

It localises to the cytoplasm. The catalysed reaction is glycyl-tRNA(Ala) + H2O = tRNA(Ala) + glycine + H(+). It carries out the reaction a D-aminoacyl-tRNA + H2O = a tRNA + a D-alpha-amino acid + H(+). In terms of biological role, an aminoacyl-tRNA editing enzyme that deacylates mischarged D-aminoacyl-tRNAs. Also deacylates mischarged glycyl-tRNA(Ala), protecting cells against glycine mischarging by AlaRS. Acts via tRNA-based rather than protein-based catalysis; rejects L-amino acids rather than detecting D-amino acids in the active site. By recycling D-aminoacyl-tRNA to D-amino acids and free tRNA molecules, this enzyme counteracts the toxicity associated with the formation of D-aminoacyl-tRNA entities in vivo and helps enforce protein L-homochirality. The polypeptide is D-aminoacyl-tRNA deacylase (Enterococcus faecalis (strain ATCC 700802 / V583)).